The primary structure comprises 303 residues: UDP-3-O-acyl-N-acetylglucosamine deacetylase (303 aa).

Positions 78, 237, and 241 each coordinate Zn(2+). The active-site Proton donor is the H264.

The protein belongs to the LpxC family. Requires Zn(2+) as cofactor.

The catalysed reaction is a UDP-3-O-[(3R)-3-hydroxyacyl]-N-acetyl-alpha-D-glucosamine + H2O = a UDP-3-O-[(3R)-3-hydroxyacyl]-alpha-D-glucosamine + acetate. Its pathway is glycolipid biosynthesis; lipid IV(A) biosynthesis; lipid IV(A) from (3R)-3-hydroxytetradecanoyl-[acyl-carrier-protein] and UDP-N-acetyl-alpha-D-glucosamine: step 2/6. In terms of biological role, catalyzes the hydrolysis of UDP-3-O-myristoyl-N-acetylglucosamine to form UDP-3-O-myristoylglucosamine and acetate, the committed step in lipid A biosynthesis. The protein is UDP-3-O-acyl-N-acetylglucosamine deacetylase of Pseudomonas aeruginosa (strain LESB58).